Reading from the N-terminus, the 129-residue chain is M-zodatoxin-Lt8i (129 aa).

Positions 1 to 20 are cleaved as a signal peptide; it reads MKYFVVALALVAAFACIAES. A propeptide spanning residues 21 to 60 is cleaved from the precursor; the sequence is KPAESEHELAEVEEENELADLEDAVWLEHLADLSDLEEAR.

This sequence belongs to the cationic peptide 06 (cytoinsectotoxin) family. Expressed by the venom gland.

The protein localises to the secreted. Functionally, insecticidal, cytolytic and antimicrobial peptide. Forms voltage-dependent, ion-permeable channels in membranes. At high concentration causes cell membrane lysis. In Lachesana tarabaevi (Spider), this protein is M-zodatoxin-Lt8i (cit 1-6).